The primary structure comprises 132 residues: Small ribosomal subunit protein uS11 (132 aa).

It belongs to the universal ribosomal protein uS11 family. In terms of assembly, part of the 30S ribosomal subunit. Interacts with proteins S7 and S18. Binds to IF-3.

In terms of biological role, located on the platform of the 30S subunit, it bridges several disparate RNA helices of the 16S rRNA. Forms part of the Shine-Dalgarno cleft in the 70S ribosome. In Chlamydia trachomatis serovar D (strain ATCC VR-885 / DSM 19411 / UW-3/Cx), this protein is Small ribosomal subunit protein uS11.